Here is a 500-residue protein sequence, read N- to C-terminus: MCADLLPPATVRGMEQLDRDAFAKTVRVPHLIIPEATNLNSAARALKQYLLKMEHYKPIRSEERKITLHPIPVKQWEDLPVEPLKELGIEKDCLVWEEIKLSYENYKYDLILKAVLPENQEGLSAFSKIGHIIHLNLKNHLMPYRRLIGEVLMDKVADCRTVVNKSNSIQNTYRNFEMELICGVPEYEVSIKENGCTYKFNFSRVYWNPRLSTEHQKITDMLEEGDLLYDLYAGVGPFTVPAAKRGCTVIANDLNPDSYSALVINCGLNKVMRNVKCYNMDAVDFIKVELRNDLLAKLADDKFQGNIHITMNLPAMAVEHLVHFPGLFSGESIELRIKPLVHVYCFAQGADDKKPIAQQKVEQWLGVEVTDMLKEITFVRNVAPNKDMMRVRNPSALGMAKKANKLKDQPKQLAKKAKNVFAVSQTKKGNLKKTKEVAAKLKKINVQDKREKVDANFKTLHAQIVAKKTPKPAPRPLPAKNKTTPDTNKMETDLTKLEMK.

Residues H215, 253-254 (DL), 281-282 (DA), and N312 contribute to the S-adenosyl-L-methionine site. The interval 463–500 (QIVAKKTPKPAPRPLPAKNKTTPDTNKMETDLTKLEMK) is disordered. A compositionally biased stretch (basic and acidic residues) spans 488-500 (NKMETDLTKLEMK).

This sequence belongs to the class I-like SAM-binding methyltransferase superfamily. TRM5/TYW2 family. In terms of assembly, monomer.

The protein resides in the mitochondrion matrix. Its subcellular location is the nucleus. It is found in the cytoplasm. It carries out the reaction guanosine(37) in tRNA + S-adenosyl-L-methionine = N(1)-methylguanosine(37) in tRNA + S-adenosyl-L-homocysteine + H(+). In terms of biological role, specifically methylates the N1 position of guanosine-37 in various cytoplasmic and mitochondrial tRNAs. Methylation is not dependent on the nature of the nucleoside 5' of the target nucleoside. This is the first step in the biosynthesis of wybutosine (yW), a modified base adjacent to the anticodon of tRNAs and required for accurate decoding. The protein is tRNA (guanine(37)-N(1))-methyltransferase of Anopheles darlingi (Mosquito).